We begin with the raw amino-acid sequence, 128 residues long: Large ribosomal subunit protein bL12 (128 aa).

Belongs to the bacterial ribosomal protein bL12 family. In terms of assembly, homodimer. Part of the ribosomal stalk of the 50S ribosomal subunit. Forms a multimeric L10(L12)X complex, where L10 forms an elongated spine to which 2 to 4 L12 dimers bind in a sequential fashion. Binds GTP-bound translation factors.

In terms of biological role, forms part of the ribosomal stalk which helps the ribosome interact with GTP-bound translation factors. Is thus essential for accurate translation. In Aquifex aeolicus (strain VF5), this protein is Large ribosomal subunit protein bL12.